Reading from the N-terminus, the 398-residue chain is Galactose-3-O-sulfotransferase 2 (398 aa).

Residues 1–10 lie on the Cytoplasmic side of the membrane; it reads MMSMLGGLQR. Residues 11–31 traverse the membrane as a helical; Signal-anchor for type II membrane protein segment; that stretch reads YFRVILLLLLALTLLLLAGFL. At 32–398 the chain is on the lumenal side; sequence HSDLELDTPL…PLKNIPFLGA (367 aa). Asn-79, Asn-132, Asn-179, Asn-287, Asn-330, and Asn-360 each carry an N-linked (GlcNAc...) asparagine glycan.

This sequence belongs to the galactose-3-O-sulfotransferase family. As to expression, ubiquitous. Detected in heart, stomach, colon, liver and spleen, in epithelial cells lining the lower to middle layer of the crypts in colonic mucosa, hepatocytes surrounding the central vein of the liver, extravillous cytotrophoblasts in the basal plate of the septum of the placenta, renal tubules of the kidney, and neuronal cells of the cerebral cortex.

The protein resides in the golgi apparatus. Its subcellular location is the golgi stack membrane. The protein operates within protein modification; carbohydrate sulfation. With respect to regulation, strongly inhibited by Cu(2+) and Zn(2+). Functionally, transfers a sulfate group to the hydroxyl group at C3 of non-reducing beta-galactosyl residues. Acts both on type 1 (Gal-beta-1,3-GlcNAc) and type 2 (Gal-beta-1,4-GlcNAc) chains with similar efficiency. This chain is Galactose-3-O-sulfotransferase 2 (GAL3ST2), found in Homo sapiens (Human).